A 442-amino-acid polypeptide reads, in one-letter code: Probable protein phosphatase 2C 15 (442 aa).

The PPM-type phosphatase domain maps to 35–303 (AAERPELQVG…DDTTCIVVDI (269 aa)). Asp-80, Gly-81, Asp-255, and Asp-294 together coordinate Mn(2+). The segment covering 420 to 434 (KKEAMEGKRRSRDSS) has biased composition (basic and acidic residues). The disordered stretch occupies residues 420–442 (KKEAMEGKRRSRDSSSRNSGSSE).

It belongs to the PP2C family. Requires Mg(2+) as cofactor. The cofactor is Mn(2+).

It carries out the reaction O-phospho-L-seryl-[protein] + H2O = L-seryl-[protein] + phosphate. It catalyses the reaction O-phospho-L-threonyl-[protein] + H2O = L-threonyl-[protein] + phosphate. This is Probable protein phosphatase 2C 15 from Oryza sativa subsp. japonica (Rice).